The chain runs to 263 residues: Endonuclease 8 (263 aa).

P2 acts as the Schiff-base intermediate with DNA in catalysis. Catalysis depends on E3, which acts as the Proton donor. The active-site Proton donor; for beta-elimination activity is K53. 3 residues coordinate DNA: Q70, R125, and N169. The segment at 229 to 263 (KVFHRDGELCERCGGIIEKTTLSSRPFYWCPGCQH) adopts an FPG-type zinc-finger fold. R253 (proton donor; for delta-elimination activity) is an active-site residue.

It belongs to the FPG family. Requires Zn(2+) as cofactor.

It carries out the reaction 2'-deoxyribonucleotide-(2'-deoxyribose 5'-phosphate)-2'-deoxyribonucleotide-DNA = a 3'-end 2'-deoxyribonucleotide-(2,3-dehydro-2,3-deoxyribose 5'-phosphate)-DNA + a 5'-end 5'-phospho-2'-deoxyribonucleoside-DNA + H(+). Its function is as follows. Involved in base excision repair of DNA damaged by oxidation or by mutagenic agents. Acts as a DNA glycosylase that recognizes and removes damaged bases. Has a preference for oxidized pyrimidines, such as thymine glycol, 5,6-dihydrouracil and 5,6-dihydrothymine. Has AP (apurinic/apyrimidinic) lyase activity and introduces nicks in the DNA strand. Cleaves the DNA backbone by beta-delta elimination to generate a single-strand break at the site of the removed base with both 3'- and 5'-phosphates. This is Endonuclease 8 from Shigella flexneri serotype 5b (strain 8401).